Consider the following 438-residue polypeptide: GTPase Obg (438 aa).

Residues 2-160 enclose the Obg domain; that stretch reads SMFLDTAKIS…RELELELKIL (159 aa). The segment at 128–147 is disordered; the sequence is NIRFATPRNPAPEIAENGEP. The 178-residue stretch at 161–338 folds into the OBG-type G domain; sequence ADVGLVGFPS…LLDATANLLA (178 aa). GTP contacts are provided by residues 167–174, 192–196, 214–217, 284–287, and 319–321; these read GFPSVGKS, FTTIV, DLPG, NKMD, and STL. The Mg(2+) site is built by serine 174 and threonine 194. One can recognise an OCT domain in the interval 360 to 438; it reads GFSEEEKAFE…IGNFEFEFVD (79 aa).

This sequence belongs to the TRAFAC class OBG-HflX-like GTPase superfamily. OBG GTPase family. In terms of assembly, monomer. The cofactor is Mg(2+).

Its subcellular location is the cytoplasm. In terms of biological role, an essential GTPase which binds GTP, GDP and possibly (p)ppGpp with moderate affinity, with high nucleotide exchange rates and a fairly low GTP hydrolysis rate. Plays a role in control of the cell cycle, stress response, ribosome biogenesis and in those bacteria that undergo differentiation, in morphogenesis control. The sequence is that of GTPase Obg from Streptococcus uberis (strain ATCC BAA-854 / 0140J).